A 652-amino-acid polypeptide reads, in one-letter code: Vitrin (652 aa).

The N-terminal stretch at 1-26 (MGIVVLTMKASVIEMFLVLLVTGIQS) is a signal peptide. One can recognise an LCCL domain in the interval 40-133 (TVPQISCDVR…LSLPRWRESF (94 aa)). Intrachain disulfides connect Cys-46/Cys-62 and Cys-66/Cys-86. Disordered stretches follow at residues 137 to 181 (EGKP…AAQP) and 196 to 231 (THTTLPKPSPSAGSTASGLRPQPAGQRSKDLGEPAL). Residues 145 to 158 (TYPSSLTYSSSKSP) are compositionally biased toward low complexity. The segment covering 196 to 212 (THTTLPKPSPSAGSTAS) has biased composition (polar residues). VWFA domains follow at residues 267 to 452 (DLSF…VKRV) and 469 to 638 (DIGF…VPKV). The N-linked (GlcNAc...) asparagine glycan is linked to Asn-494.

In terms of assembly, binds dermatan sulfate and chondroitin sulfate.

Its subcellular location is the secreted. It localises to the extracellular space. The protein localises to the extracellular matrix. Functionally, promotes matrix assembly and cell adhesiveness. Plays a role in spinal cord formation by regulating the proliferation and differentiation of neural stem cells. This chain is Vitrin (VIT), found in Bos taurus (Bovine).